Reading from the N-terminus, the 60-residue chain is Large ribosomal subunit protein uL30 (60 aa).

The protein belongs to the universal ribosomal protein uL30 family. Part of the 50S ribosomal subunit.

This Thermus thermophilus (strain ATCC BAA-163 / DSM 7039 / HB27) protein is Large ribosomal subunit protein uL30.